A 353-amino-acid chain; its full sequence is Photosystem II D2 protein (353 aa).

Position 2 is an N-acetylthreonine (T2). A Phosphothreonine modification is found at T2. The helical transmembrane segment at C41–T61 threads the bilayer. H118 provides a ligand contact to chlorophyll a. Residues G125–P141 form a helical membrane-spanning segment. Q130 and N143 together coordinate pheophytin a. The chain crosses the membrane as a helical span at residues V153 to S166. H198 contributes to the chlorophyll a binding site. Residues A208–D228 form a helical membrane-spanning segment. A plastoquinone contacts are provided by H215 and F262. Position 215 (H215) interacts with Fe cation. H269 serves as a coordination point for Fe cation. The chain crosses the membrane as a helical span at residues G279 to R295.

This sequence belongs to the reaction center PufL/M/PsbA/D family. As to quaternary structure, PSII is composed of 1 copy each of membrane proteins PsbA, PsbB, PsbC, PsbD, PsbE, PsbF, PsbH, PsbI, PsbJ, PsbK, PsbL, PsbM, PsbT, PsbX, PsbY, PsbZ, Psb30/Ycf12, at least 3 peripheral proteins of the oxygen-evolving complex and a large number of cofactors. It forms dimeric complexes. The D1/D2 heterodimer binds P680, chlorophylls that are the primary electron donor of PSII, and subsequent electron acceptors. It shares a non-heme iron and each subunit binds pheophytin, quinone, additional chlorophylls, carotenoids and lipids. There is also a Cl(-1) ion associated with D1 and D2, which is required for oxygen evolution. The PSII complex binds additional chlorophylls, carotenoids and specific lipids. is required as a cofactor.

Its subcellular location is the plastid. It is found in the chloroplast thylakoid membrane. The catalysed reaction is 2 a plastoquinone + 4 hnu + 2 H2O = 2 a plastoquinol + O2. Its function is as follows. Photosystem II (PSII) is a light-driven water:plastoquinone oxidoreductase that uses light energy to abstract electrons from H(2)O, generating O(2) and a proton gradient subsequently used for ATP formation. It consists of a core antenna complex that captures photons, and an electron transfer chain that converts photonic excitation into a charge separation. The D1/D2 (PsbA/PsbD) reaction center heterodimer binds P680, the primary electron donor of PSII as well as several subsequent electron acceptors. D2 is needed for assembly of a stable PSII complex. This is Photosystem II D2 protein from Cycas taitungensis (Prince sago).